The sequence spans 81 residues: MSHTVKIYDTCIGCTQCVRACPTDVLEMVPWDGCKAGQIASSPRVEDCVGCKRCETACPTDFLSVRVYLGAETTRSLGLAY.

4Fe-4S ferredoxin-type domains follow at residues S2–W31 and G37–Y68. Residues C11, C14, C17, C21, C48, C51, C54, and C58 each coordinate [4Fe-4S] cluster.

The eukaryotic PSI reaction center is composed of at least 11 subunits. [4Fe-4S] cluster is required as a cofactor.

The protein resides in the plastid. It is found in the chloroplast thylakoid membrane. The catalysed reaction is reduced [plastocyanin] + hnu + oxidized [2Fe-2S]-[ferredoxin] = oxidized [plastocyanin] + reduced [2Fe-2S]-[ferredoxin]. Functionally, apoprotein for the two 4Fe-4S centers FA and FB of photosystem I (PSI); essential for photochemical activity. FB is the terminal electron acceptor of PSI, donating electrons to ferredoxin. The C-terminus interacts with PsaA/B/D and helps assemble the protein into the PSI complex. Required for binding of PsaD and PsaE to PSI. PSI is a plastocyanin/cytochrome c6-ferredoxin oxidoreductase, converting photonic excitation into a charge separation, which transfers an electron from the donor P700 chlorophyll pair to the spectroscopically characterized acceptors A0, A1, FX, FA and FB in turn. This chain is Photosystem I iron-sulfur center, found in Phaeodactylum tricornutum (strain CCAP 1055/1).